Consider the following 193-residue polypeptide: Ion-translocating oxidoreductase complex subunit A (193 aa).

A run of 6 helical transmembrane segments spans residues 5 to 25 (LLLF…FLGL), 47 to 67 (FVMT…LVPL), 72 to 92 (LRTM…EMVV), 102 to 122 (LLGI…VALL), 134 to 154 (ALYG…FAAI), and 171 to 191 (AIAL…SGLV).

The protein belongs to the NqrDE/RnfAE family. As to quaternary structure, the complex is composed of six subunits: RnfA, RnfB, RnfC, RnfD, RnfE and RnfG.

Its subcellular location is the cell inner membrane. Functionally, part of a membrane-bound complex that couples electron transfer with translocation of ions across the membrane. The protein is Ion-translocating oxidoreductase complex subunit A of Cronobacter sakazakii (strain ATCC BAA-894) (Enterobacter sakazakii).